A 254-amino-acid chain; its full sequence is Triosephosphate isomerase 2 (254 aa).

9–11 (NMK) serves as a coordination point for substrate. H96 serves as the catalytic Electrophile. E168 acts as the Proton acceptor in catalysis. Substrate is bound by residues G174 and S212.

This sequence belongs to the triosephosphate isomerase family. Homodimer.

The protein resides in the cytoplasm. It catalyses the reaction D-glyceraldehyde 3-phosphate = dihydroxyacetone phosphate. It functions in the pathway polyol metabolism; glycerol degradation. In terms of biological role, involved in the glycerol metabolism. Catalyzes stereospecifically the conversion of dihydroxyacetone phosphate (DHAP) to D-glyceraldehyde-3-phosphate (G3P). The sequence is that of Triosephosphate isomerase 2 from Listeria innocua serovar 6a (strain ATCC BAA-680 / CLIP 11262).